The chain runs to 489 residues: Serine/threonine-protein kinase dyf-5 (489 aa).

Residues 11-291 (YLMTKRLGDG…ANQSLRYKYF (281 aa)) enclose the Protein kinase domain. Residues 17 to 25 (LGDGTFGEV) and Lys40 contribute to the ATP site. Asp132 functions as the Proton acceptor in the catalytic mechanism. Disordered stretches follow at residues 366-385 (EKSDNKPLGPTKSNEAKPTA) and 452-489 (QTGPTVSNQTNNHSANNSHSPNKMSNTGRVDWAAKYVK). Over residues 458–473 (SNQTNNHSANNSHSPN) the composition is skewed to low complexity.

This sequence belongs to the protein kinase superfamily. CMGC Ser/Thr protein kinase family. RCK subfamily. Requires Mg(2+) as cofactor. Expressed in head neurons including amphid and labial sensory neurons and 3 pairs of neurons in the tail including phasmid sensory neurons. In male, expressed in the tail including the sensory rays and the spicule.

It localises to the perikaryon. It is found in the cell projection. The protein resides in the dendrite. Its subcellular location is the axon. The protein localises to the cilium. The enzyme catalyses L-seryl-[protein] + ATP = O-phospho-L-seryl-[protein] + ADP + H(+). It catalyses the reaction L-threonyl-[protein] + ATP = O-phospho-L-threonyl-[protein] + ADP + H(+). Its function is as follows. Serine/threonine-protein kinase which is required for ciliogenesis. Regulates the length and the morphology of sensory neuron cilia. In addition, plays a role in the anterograde intraflagellar transport (IFT) in the cilia by regulating the undocking of kinesin-II motor complex (composed of klp-11, klp-20 and kap-1) before reaching the distal segment and the docking of kinesin motor osm-3 onto IFT cargos. This chain is Serine/threonine-protein kinase dyf-5, found in Caenorhabditis elegans.